Consider the following 293-residue polypeptide: Notch homolog 2 N-terminal-like protein C (293 aa).

EGF-like domains lie at 42–81, 82–120, 123–161, and 162–198; these read PPRM…EYCQ, HRDP…EDCQ, TSHP…KECQ, and WTDA…QKCE. Cystine bridges form between C46–C59, C53–C69, C71–C80, C86–C97, C91–C108, C110–C119, C127–C139, C133–C149, C151–C160, C166–C177, C171–C186, C188–C197, C204–C216, C210–C225, C227–C236, C243–C254, and C248–C264. An N-linked (GlcNAc...) asparagine glycan is attached at N64. N-linked (GlcNAc...) asparagine glycosylation occurs at N173. Residues 200–237 enclose the EGF-like 5; calcium-binding domain; it reads DVNECDIPGHCQHGGTCLNLPGSYQCQCLQGFTGQYCD. The 38-residue stretch at 239–276 folds into the EGF-like 6 domain; the sequence is LYVPCAPSPCVNGGTCRQTGDFTFECNCLPETVRRGTE.

This sequence belongs to the NOTCH family. As to quaternary structure, interacts with NOTCH2. Interacts with DLL1; the interaction is direct. As to expression, expressed in radial glia neural stem cells during cortical development.

It localises to the secreted. Its function is as follows. Human-specific protein that promotes neural progenitor proliferation and evolutionary expansion of the brain neocortex by regulating the Notch signaling pathway. Able to promote neural progenitor self-renewal, possibly by down-regulating neuronal differentiation genes, thereby delaying the differentiation of neuronal progenitors and leading to an overall final increase in neuronal production. Acts by enhancing the Notch signaling pathway via two different mechanisms that probably work in parallel to reach the same effect. Enhances Notch signaling pathway in a non-cell-autonomous manner via direct interaction with NOTCH2. Also promotes Notch signaling pathway in a cell-autonomous manner through inhibition of cis DLL1-NOTCH2 interactions, which promotes neuronal differentiation. This is Notch homolog 2 N-terminal-like protein C from Homo sapiens (Human).